Consider the following 134-residue polypeptide: Z-ring associated protein G (134 aa).

The helical transmembrane segment at 7 to 27 threads the bilayer; that stretch reads EIWVAIGIAFIVGLFIGYIIV. Residues 107-134 are disordered; the sequence is ATDKSQNEQPRDYSEGASGLFKENKEEN. Residues 111-120 show a composition bias toward basic and acidic residues; it reads SQNEQPRDYS.

It belongs to the ZapG family.

The protein resides in the cell inner membrane. Its function is as follows. Involved in cell division, cell envelope biogenesis and cell shape maintenance. This chain is Z-ring associated protein G, found in Haemophilus influenzae (strain ATCC 51907 / DSM 11121 / KW20 / Rd).